Reading from the N-terminus, the 696-residue chain is Polyribonucleotide nucleotidyltransferase (696 aa).

Positions 489 and 495 each coordinate Mg(2+). Positions 556-615 (PQYVTMKINPEKIRDVIGKGGVVIREITEATNCAIDISDDGTIKIAAHTTEEGEAAKRRI) constitute a KH domain. One can recognise an S1 motif domain in the interval 625 to 693 (GKVYEGTVVK…RQGRVRLSMK (69 aa)).

The protein belongs to the polyribonucleotide nucleotidyltransferase family. Component of the RNA degradosome, which is a multiprotein complex involved in RNA processing and mRNA degradation. Requires Mg(2+) as cofactor.

The protein localises to the cytoplasm. It carries out the reaction RNA(n+1) + phosphate = RNA(n) + a ribonucleoside 5'-diphosphate. In terms of biological role, involved in mRNA degradation. Catalyzes the phosphorolysis of single-stranded polyribonucleotides processively in the 3'- to 5'-direction. The sequence is that of Polyribonucleotide nucleotidyltransferase from Coxiella burnetii (strain RSA 331 / Henzerling II).